A 248-amino-acid chain; its full sequence is TPR repeat-containing protein slr0751 (248 aa).

TPR repeat units lie at residues 61-94 (PEAI…SPDS), 95-128 (PETH…DRYY), 129-162 (IPPY…DPNR), and 163-196 (YKAY…RPDY).

The sequence is that of TPR repeat-containing protein slr0751 from Synechocystis sp. (strain ATCC 27184 / PCC 6803 / Kazusa).